We begin with the raw amino-acid sequence, 296 residues long: ADP-forming sulfoacetate-CoA ligase subunit SqwL (296 aa).

CoA contacts are provided by residues 17–20, lysine 43, and 96–98; these read TGSE and IAD. Histidine 251 (tele-phosphohistidine intermediate) is an active-site residue.

It belongs to the succinate/malate CoA ligase alpha subunit family. Forms a complex with SqwK.

The catalysed reaction is sulfoacetate + ATP + CoA = sulfoacetyl-CoA + ADP + phosphate. In terms of biological role, part of a variant of the sulfo-TK pathway, a D-sulfoquinovose degradation pathway that produces sulfoacetate. Hydrolyzes sulfoacetyl-coenzyme A (sulfoacetyl-CoA) to produce sulfoacetate and CoA coupled with the phosphorylation of ADP to generate ATP. Cannot use succinate, acetate or 3-hydroxypropionate, and shows only residual activities with malonate and 3-sulfopropanoate. The polypeptide is ADP-forming sulfoacetate-CoA ligase subunit SqwL (Acholeplasma sp).